Here is a 671-residue protein sequence, read N- to C-terminus: Beta-galactosidase 1 (671 aa).

Residues 1 to 18 (MKLIVLIFFLLFINLNYC) form the signal peptide. Catalysis depends on Glu-200, which acts as the Proton donor. A glycan (N-linked (GlcNAc...) asparagine) is linked at Asn-228. The active-site Nucleophile is the Glu-288. 7 N-linked (GlcNAc...) asparagine glycosylation sites follow: Asn-321, Asn-391, Asn-400, Asn-499, Asn-509, Asn-564, and Asn-595.

This sequence belongs to the glycosyl hydrolase 35 family.

It localises to the lysosome. It catalyses the reaction Hydrolysis of terminal non-reducing beta-D-galactose residues in beta-D-galactosides.. Functionally, cleaves beta-linked terminal galactosyl residues from gangliosides, glycoproteins, and glycosaminoglycans. This is Beta-galactosidase 1 (glb1) from Dictyostelium discoideum (Social amoeba).